A 69-amino-acid polypeptide reads, in one-letter code: uncharacterized protein (69 aa).

The chain crosses the membrane as a helical span at residues 32–54 (MLGAIDVAVAVASVPTLFVVTAI).

Its subcellular location is the membrane. This is an uncharacterized protein from Sinorhizobium fredii (strain NBRC 101917 / NGR234).